Reading from the N-terminus, the 283-residue chain is Bifunctional protein FolD (283 aa).

NADP(+) is bound by residues 166 to 168 (GRS), serine 191, and threonine 232.

Belongs to the tetrahydrofolate dehydrogenase/cyclohydrolase family. In terms of assembly, homodimer.

The enzyme catalyses (6R)-5,10-methylene-5,6,7,8-tetrahydrofolate + NADP(+) = (6R)-5,10-methenyltetrahydrofolate + NADPH. The catalysed reaction is (6R)-5,10-methenyltetrahydrofolate + H2O = (6R)-10-formyltetrahydrofolate + H(+). The protein operates within one-carbon metabolism; tetrahydrofolate interconversion. Functionally, catalyzes the oxidation of 5,10-methylenetetrahydrofolate to 5,10-methenyltetrahydrofolate and then the hydrolysis of 5,10-methenyltetrahydrofolate to 10-formyltetrahydrofolate. This chain is Bifunctional protein FolD, found in Halothermothrix orenii (strain H 168 / OCM 544 / DSM 9562).